Consider the following 201-residue polypeptide: Translation initiation factor IF-3 (201 aa).

Positions 170-201 (TPKSASKKGHTPPKTQVEASKQANESAETEEE) are disordered. The span at 182–195 (PKTQVEASKQANES) shows a compositional bias: polar residues.

The protein belongs to the IF-3 family. In terms of assembly, monomer.

It is found in the cytoplasm. Functionally, IF-3 binds to the 30S ribosomal subunit and shifts the equilibrium between 70S ribosomes and their 50S and 30S subunits in favor of the free subunits, thus enhancing the availability of 30S subunits on which protein synthesis initiation begins. This Porphyromonas gingivalis (strain ATCC BAA-308 / W83) protein is Translation initiation factor IF-3.